Consider the following 467-residue polypeptide: ATP-dependent protease ATPase subunit HslU (467 aa).

ATP-binding positions include Ile18, 60 to 65 (GVGKTE), Asp280, Glu345, and Arg417.

It belongs to the ClpX chaperone family. HslU subfamily. As to quaternary structure, a double ring-shaped homohexamer of HslV is capped on each side by a ring-shaped HslU homohexamer. The assembly of the HslU/HslV complex is dependent on binding of ATP.

It localises to the cytoplasm. In terms of biological role, ATPase subunit of a proteasome-like degradation complex; this subunit has chaperone activity. The binding of ATP and its subsequent hydrolysis by HslU are essential for unfolding of protein substrates subsequently hydrolyzed by HslV. HslU recognizes the N-terminal part of its protein substrates and unfolds these before they are guided to HslV for hydrolysis. This chain is ATP-dependent protease ATPase subunit HslU, found in Lactobacillus helveticus (strain DPC 4571).